We begin with the raw amino-acid sequence, 314 residues long: Methionyl-tRNA formyltransferase (314 aa).

Residue 111–114 participates in (6S)-5,6,7,8-tetrahydrofolate binding; that stretch reads SLLP.

The protein belongs to the Fmt family.

The enzyme catalyses L-methionyl-tRNA(fMet) + (6R)-10-formyltetrahydrofolate = N-formyl-L-methionyl-tRNA(fMet) + (6S)-5,6,7,8-tetrahydrofolate + H(+). In terms of biological role, attaches a formyl group to the free amino group of methionyl-tRNA(fMet). The formyl group appears to play a dual role in the initiator identity of N-formylmethionyl-tRNA by promoting its recognition by IF2 and preventing the misappropriation of this tRNA by the elongation apparatus. The polypeptide is Methionyl-tRNA formyltransferase (Chlorobium chlorochromatii (strain CaD3)).